The following is an 83-amino-acid chain: Cobrotoxin homolog (83 aa).

The signal sequence occupies residues 1–21 (METLLLTLLVVTIVCLDLGYT). 4 disulfides stabilise this stretch: C24–C45, C38–C62, C64–C75, and C76–C81.

Belongs to the three-finger toxin family. Short-chain subfamily. Type I alpha-neurotoxin sub-subfamily. In terms of tissue distribution, expressed by the venom gland.

It is found in the secreted. In terms of biological role, binds to muscle nicotinic acetylcholine receptor (nAChR) and inhibit acetylcholine from binding to the receptor, thereby impairing neuromuscular transmission. This is Cobrotoxin homolog from Naja naja (Indian cobra).